The chain runs to 597 residues: Elongation factor 4 (597 aa).

The 183-residue stretch at 2-184 (KHIRNFSIIA…NIVSAIPAPE (183 aa)) folds into the tr-type G domain. Residues 14–19 (DHGKST) and 131–134 (NKID) each bind GTP.

Belongs to the TRAFAC class translation factor GTPase superfamily. Classic translation factor GTPase family. LepA subfamily.

The protein resides in the cell inner membrane. The catalysed reaction is GTP + H2O = GDP + phosphate + H(+). In terms of biological role, required for accurate and efficient protein synthesis under certain stress conditions. May act as a fidelity factor of the translation reaction, by catalyzing a one-codon backward translocation of tRNAs on improperly translocated ribosomes. Back-translocation proceeds from a post-translocation (POST) complex to a pre-translocation (PRE) complex, thus giving elongation factor G a second chance to translocate the tRNAs correctly. Binds to ribosomes in a GTP-dependent manner. The polypeptide is Elongation factor 4 (Vibrio campbellii (strain ATCC BAA-1116)).